The following is a 448-amino-acid chain: Gamete and mating-type specific protein A (448 aa).

An N-terminal signal peptide occupies residues 1–19 (MKLILVLLCLISTLFVVKG). The SCP domain occupies 30 to 157 (VSYHNKWRSS…PDKSEVSCSY (128 aa)). N-linked (GlcNAc...) asparagine glycosylation is found at N55, N98, and N119. Residues 171–242 (PKTTTPAPTT…PTTPAPTSTL (72 aa)) form a disordered region. Positions 178-236 (PTTPAPTTPKPTTPAPTTPKPTTPAPTTPKPTTPAPTTPKPTTPAPTTPKPTTPAPTTP) are enriched in pro residues. Active-site residues include C262, H397, and N415.

This sequence belongs to the peptidase C1 family.

The protein resides in the secreted. In terms of biological role, thiol protease that seems to be involved in the sexual development. This is Gamete and mating-type specific protein A (gmsA) from Dictyostelium discoideum (Social amoeba).